A 249-amino-acid chain; its full sequence is Small ribosomal subunit protein uS3y (249 aa).

One can recognise a KH type-2 domain in the interval 21-92 (LNEVLTRELA…SVELYAEKVN (72 aa)). Serine 212 carries the post-translational modification Phosphoserine.

The protein belongs to the universal ribosomal protein uS3 family.

In Arabidopsis thaliana (Mouse-ear cress), this protein is Small ribosomal subunit protein uS3y (RPS3B).